The chain runs to 397 residues: Nickel-cobalt-cadmium resistance protein NccB (397 aa).

The helical transmembrane segment at 10–30 threads the bilayer; the sequence is PSWPMIAGVAAAAALVGFGAA. Residues 137–195 are a coiled coil; the sequence is EAAAMAAERKVAQARADLARKTYERESSLFQQGVTPRQEMESARIALDVAQAEVQRAAT.

It belongs to the membrane fusion protein (MFP) (TC 8.A.1) family.

It localises to the cell inner membrane. Component of the NCC cation efflux system that confers resistance to nickel, cobalt and cadmium. The protein is Nickel-cobalt-cadmium resistance protein NccB (nccB) of Alcaligenes xylosoxydans xylosoxydans (Achromobacter xylosoxidans).